Consider the following 511-residue polypeptide: Maturase K (511 aa).

It belongs to the intron maturase 2 family. MatK subfamily.

It is found in the plastid. Its subcellular location is the chloroplast. Its function is as follows. Usually encoded in the trnK tRNA gene intron. Probably assists in splicing its own and other chloroplast group II introns. The chain is Maturase K from Maihuenia poeppigii (Hardy cactus).